A 431-amino-acid chain; its full sequence is V-type ATP synthase beta chain (431 aa).

The protein belongs to the ATPase alpha/beta chains family.

In terms of biological role, produces ATP from ADP in the presence of a proton gradient across the membrane. The V-type beta chain is a regulatory subunit. The polypeptide is V-type ATP synthase beta chain (Treponema denticola (strain ATCC 35405 / DSM 14222 / CIP 103919 / JCM 8153 / KCTC 15104)).